The primary structure comprises 346 residues: Probable RNA methyltransferase PSPA7_3453 (346 aa).

Glu91 serves as the catalytic Proton acceptor. The Radical SAM core domain occupies 94 to 320; it reads LLPRGGLCVS…TKVRNSAGQD (227 aa). Cys101 and Cys325 form a disulfide bridge. Residues Cys108, Cys112, and Cys115 each contribute to the [4Fe-4S] cluster site. S-adenosyl-L-methionine contacts are provided by residues 153 to 154, Ser183, 206 to 208, and Asn282; these read GE and SLH. The S-methylcysteine intermediate role is filled by Cys325.

It belongs to the radical SAM superfamily. RlmN family. It depends on [4Fe-4S] cluster as a cofactor.

The protein localises to the cytoplasm. This chain is Probable RNA methyltransferase PSPA7_3453, found in Pseudomonas paraeruginosa (strain DSM 24068 / PA7) (Pseudomonas aeruginosa (strain PA7)).